We begin with the raw amino-acid sequence, 454 residues long: MSLDSRRYHITTYGCQMNKADSERMAGVLENMGYQWSENPDDANLILCNTCTIRDNAEHKVYSYLGRQAKRKHAQPDLTLVVAGCVAQQEGDALLRRVPELDLVMGPQHANRLQDLLEQVASGQQVLATEPIHIVEDITKPRRDSAVTAWVNVIYGCNERCTYCVVPNVRGVEQSRTPEAIRAEMVQLGEQGFKEVTLLGQNIDAYGRDLPGTTSEGRHQHTLTDLLYFVHDVPGIERIRFATSHPRYFTERLIQACYELPKVCEHFHIPFQSGDNDVLKAMSRGYTHEKYRRIIDNIRAIMPDASISADAIVGFPGETEEQFMNTMQLVEDIEFDLLNTAAYSPRPGTPAALWDNQLSEEVKADRLQRLNRLVGVCAELRSQRYANRIEEVLVEDQNPKDPTQVMGRTRGNRLTFFPGNIEQLRGEIIAVKVTEVRSFSLTGEPLSSVATAVR.

An MTTase N-terminal domain is found at 6–122 (RRYHITTYGC…LQDLLEQVAS (117 aa)). Cys-15, Cys-51, Cys-85, Cys-157, Cys-161, and Cys-164 together coordinate [4Fe-4S] cluster. In terms of domain architecture, Radical SAM core spans 143-384 (RDSAVTAWVN…GVCAELRSQR (242 aa)). The TRAM domain maps to 383 to 447 (QRYANRIEEV…SFSLTGEPLS (65 aa)).

This sequence belongs to the methylthiotransferase family. MiaB subfamily. In terms of assembly, monomer. It depends on [4Fe-4S] cluster as a cofactor.

It is found in the cytoplasm. It carries out the reaction N(6)-dimethylallyladenosine(37) in tRNA + (sulfur carrier)-SH + AH2 + 2 S-adenosyl-L-methionine = 2-methylsulfanyl-N(6)-dimethylallyladenosine(37) in tRNA + (sulfur carrier)-H + 5'-deoxyadenosine + L-methionine + A + S-adenosyl-L-homocysteine + 2 H(+). In terms of biological role, catalyzes the methylthiolation of N6-(dimethylallyl)adenosine (i(6)A), leading to the formation of 2-methylthio-N6-(dimethylallyl)adenosine (ms(2)i(6)A) at position 37 in tRNAs that read codons beginning with uridine. This chain is tRNA-2-methylthio-N(6)-dimethylallyladenosine synthase, found in Acaryochloris marina (strain MBIC 11017).